We begin with the raw amino-acid sequence, 1052 residues long: F-box/WD repeat-containing protein 10 (1052 aa).

Residues 169–206 (GLNQDITDVCFSPEKDHSSKSATSQVYWTAKTQHTSLP) form a WD 1 repeat. Residues 276–323 (DFIRYLPIHLSKYILRMLDRHTLNKCASVSQHWAAMAQQVKMDLSAHG) enclose the F-box domain. WD repeat units lie at residues 409 to 447 (SDTWDQNRVIHYSGGDLIAVSSNRKIHLLDIIQVKAIPV), 451 to 490 (GHAGSVRALFLCEEENFLLSGSYDLSIRYWDLKSGVCTRI), 493 to 532 (GHQGTITCMDLCKNRLVSGGRDCQVKVWDVDTGKCLKTFR), 534 to 569 (KDPILATRINDTYIVSSCERGLVKVWHIAMAQLVKT), 572 to 609 (GHEGAVKCLFFDQWHLLSGSTDGLVMAWSMVGKYERCL), and 611 to 652 (AFKH…KVLK). Residues 690 to 719 (YAVEKTKQKKNKEKEEEKEENSLMEILSKC) are a coiled coil. Residues 766–805 (LQSQGKSKSPRRDADDVEKAQKQGQLETPGKLPSHPKKKS) form a disordered region. Positions 775 to 786 (PRRDADDVEKAQ) are enriched in basic and acidic residues. Residues 986 to 1010 (VLLTVKEEKEHQEAKMKEYQAREST) are a coiled coil.

Its function is as follows. Probable substrate-recognition component of a SCF (SKP1-CUL1-F-box protein)-type E3 ubiquitin ligase complex which mediates the ubiquitination and subsequent proteasomal degradation of target proteins. Overexpression is leading to degradation of CBX5 and CBX1. This is F-box/WD repeat-containing protein 10 (FBXW10) from Homo sapiens (Human).